The chain runs to 123 residues: Small ribosomal subunit protein uS13 (123 aa).

Positions 103 to 123 (TRTNARTRKGPKKTVGVRRKK) are disordered. Residues 105-123 (TNARTRKGPKKTVGVRRKK) show a composition bias toward basic residues.

This sequence belongs to the universal ribosomal protein uS13 family. Part of the 30S ribosomal subunit. Forms a loose heterodimer with protein S19. Forms two bridges to the 50S subunit in the 70S ribosome.

Located at the top of the head of the 30S subunit, it contacts several helices of the 16S rRNA. In the 70S ribosome it contacts the 23S rRNA (bridge B1a) and protein L5 of the 50S subunit (bridge B1b), connecting the 2 subunits; these bridges are implicated in subunit movement. Contacts the tRNAs in the A and P-sites. The polypeptide is Small ribosomal subunit protein uS13 (Desulforudis audaxviator (strain MP104C)).